We begin with the raw amino-acid sequence, 785 residues long: Endonuclease MutS2 (785 aa).

335-342 is an ATP binding site; the sequence is GPNTGGKT. One can recognise a Smr domain in the interval 710–785; the sequence is LDLRGERYED…GNGVTIVEFK (76 aa).

It belongs to the DNA mismatch repair MutS family. MutS2 subfamily. As to quaternary structure, homodimer. Binds to stalled ribosomes, contacting rRNA.

Its function is as follows. Endonuclease that is involved in the suppression of homologous recombination and thus may have a key role in the control of bacterial genetic diversity. Functionally, acts as a ribosome collision sensor, splitting the ribosome into its 2 subunits. Detects stalled/collided 70S ribosomes which it binds and splits by an ATP-hydrolysis driven conformational change. Acts upstream of the ribosome quality control system (RQC), a ribosome-associated complex that mediates the extraction of incompletely synthesized nascent chains from stalled ribosomes and their subsequent degradation. Probably generates substrates for RQC. The sequence is that of Endonuclease MutS2 from Listeria welshimeri serovar 6b (strain ATCC 35897 / DSM 20650 / CCUG 15529 / CIP 8149 / NCTC 11857 / SLCC 5334 / V8).